The primary structure comprises 130 residues: Glycine cleavage system H protein (130 aa).

The Lipoyl-binding domain occupies V25–K106. The residue at position 66 (K66) is an N6-lipoyllysine.

Belongs to the GcvH family. As to quaternary structure, the glycine cleavage system is composed of four proteins: P, T, L and H. The cofactor is (R)-lipoate.

The glycine cleavage system catalyzes the degradation of glycine. The H protein shuttles the methylamine group of glycine from the P protein to the T protein. In Leptospira biflexa serovar Patoc (strain Patoc 1 / Ames), this protein is Glycine cleavage system H protein.